Here is a 629-residue protein sequence, read N- to C-terminus: 1-deoxy-D-xylulose-5-phosphate synthase (629 aa).

Thiamine diphosphate is bound by residues His72 and Gly113 to Ser115. Asp144 contributes to the Mg(2+) binding site. Thiamine diphosphate-binding positions include Gly145–Ala146, Asn173, Tyr284, and Glu366. A Mg(2+)-binding site is contributed by Asn173.

This sequence belongs to the transketolase family. DXPS subfamily. Homodimer. Mg(2+) is required as a cofactor. The cofactor is thiamine diphosphate.

The catalysed reaction is D-glyceraldehyde 3-phosphate + pyruvate + H(+) = 1-deoxy-D-xylulose 5-phosphate + CO2. Its pathway is metabolic intermediate biosynthesis; 1-deoxy-D-xylulose 5-phosphate biosynthesis; 1-deoxy-D-xylulose 5-phosphate from D-glyceraldehyde 3-phosphate and pyruvate: step 1/1. Catalyzes the acyloin condensation reaction between C atoms 2 and 3 of pyruvate and glyceraldehyde 3-phosphate to yield 1-deoxy-D-xylulose-5-phosphate (DXP). In Halalkalibacterium halodurans (strain ATCC BAA-125 / DSM 18197 / FERM 7344 / JCM 9153 / C-125) (Bacillus halodurans), this protein is 1-deoxy-D-xylulose-5-phosphate synthase.